Consider the following 414-residue polypeptide: MTDTHYDVVIVGAGHGGAQTAIALRQNGFAGTIAIIGAEPDLPYERPPLSKEYLAAEKGFERILIRPASFWNDRHIAMHLGCAVERVDPTQRLVFLADGRSMGYGDLVWCAGGSARRLDCTGHDLGGVHYVRTRADTDALAAELPGVSKVVIIGGGYIGLEAAAVMAKFGKNVTLIEALDRVLARVAGEPLSRFFEEKHRSRGVDVRLRTKVGCLLGQDGRVTHVELNDADPIPADLVIVGIGIIPAISPLVVAGAKASNGLLVDASGRTSIPHVYALGDCAAHVNSFAPNDIPIRLESVQNANDQAVVVARTICGTAAQYHAVPWFWSSQYDIRLQTVGLTAGYDQTFVRGDPATGSFTVVYGRDGRVIALDCVNATKDYVQGKRLVEAKALIEPGMTDPQYPLKNFMTPSPA.

7–38 (DVVIVGAGHGGAQTAIALRQNGFAGTIAIIGA) is a binding site for FAD. 149 to 177 (KVVIIGGGYIGLEAAAVMAKFGKNVTLIE) is a binding site for NAD(+).

Belongs to the FAD-dependent oxidoreductase family. In terms of assembly, monomer. Carbazole 1,9a-dioxygenase complex consists of a terminal oxygenase component CarAa, a ferredoxin reductase component fdr and a ferredoxin component CarAc. FAD serves as cofactor.

The enzyme catalyses 2 reduced [2Fe-2S]-[ferredoxin] + NAD(+) + H(+) = 2 oxidized [2Fe-2S]-[ferredoxin] + NADH. It carries out the reaction 2 reduced [2Fe-2S]-[ferredoxin] + NADP(+) + H(+) = 2 oxidized [2Fe-2S]-[ferredoxin] + NADPH. Functionally, part of the multicomponent carbazole 1,9a-dioxygenase (CARDO), that converts carbazole (CAR) into 2-aminobiphenyl-2,3-diol. This chain is Ferredoxin--NAD(P)(+) reductase fdr (fdr), found in Sphingomonas sp.